A 128-amino-acid polypeptide reads, in one-letter code: Calcitonin gene-related peptide 1 (128 aa).

The signal sequence occupies residues 1 to 25 (MGFLKFSPFLVVSILLLYQACGLQA). Residues 26-80 (VPLRSTLESSPGMAATLSEEEARLLLAALVQNYMQMKVRELEQEQEAEGSSVTAQ) constitute a propeptide that is removed on maturation. The cysteines at positions 84 and 89 are disulfide-linked. A Phenylalanine amide modification is found at Phe-119. The propeptide occupies 125 to 128 (DLQA).

The protein belongs to the calcitonin family.

The protein resides in the secreted. CGRP1/CALCA is a peptide hormone that induces vasodilation mediated by the CALCRL-RAMP1 receptor complex. Dilates a variety of vessels including the coronary, cerebral and systemic vasculature. Its abundance in the CNS also points toward a neurotransmitter or neuromodulator role. It also elevates platelet cAMP. CGRP1 can also bind and activate CALCR-RAMP1 (AMYR1) receptor complex. This is Calcitonin gene-related peptide 1 from Rattus norvegicus (Rat).